The primary structure comprises 601 residues: Glutathione-regulated potassium-efflux system protein KefB (601 aa).

13 helical membrane-spanning segments follow: residues 4–24 (ADLLTAGVLFLFAAVAAVPLA), 29–49 (IGAVLGYLLAGIAIGPWGLGF), 55–75 (EILHFSELGVVFLMFIIGLEL), 87–107 (IFGVGAAQVLLSAAVLAGLLM), 111–131 (FLWQAAVVGGIGLAMSSTAMA), 152–172 (VLLFQDLAVIPALALVPLLAG), 177–197 (HFDWFKVAMKVLAFAVMLIGG), 207–227 (FIAASGVREVFTAATLLLVLS), 230–250 (LFMDALGLSMALGTFIAGVLL), 262–282 (AIDPFKGLLLGLFFISVGMSL), 284–304 (LGVLYTHLLWVAASVVILVVI), 324–344 (MQFASVLSQGGEFAFVLFSTA), and 356–376 (ALLLVTVTLSMMTTPLLMKGI). Residues 400–519 (KPQVIVVGFG…AGVTQFSRET (120 aa)) form the RCK N-terminal domain.

The protein belongs to the monovalent cation:proton antiporter 2 (CPA2) transporter (TC 2.A.37) family. KefB subfamily. Interacts with the regulatory subunit KefG.

The protein localises to the cell inner membrane. Functionally, pore-forming subunit of a potassium efflux system that confers protection against electrophiles. Catalyzes K(+)/H(+) antiport. This Salmonella paratyphi A (strain ATCC 9150 / SARB42) protein is Glutathione-regulated potassium-efflux system protein KefB.